The chain runs to 392 residues: Formate-dependent phosphoribosylglycinamide formyltransferase (392 aa).

Residues 22–23 and E82 each bind N(1)-(5-phospho-beta-D-ribosyl)glycinamide; that span reads EL. Residues R114, K155, 160-165, 195-198, and E203 contribute to the ATP site; these read SSGKGQ and EGVV. An ATP-grasp domain is found at 119-308; the sequence is RLAAEELQLP…EFALHVRAFL (190 aa). 2 residues coordinate Mg(2+): E267 and E279. N(1)-(5-phospho-beta-D-ribosyl)glycinamide-binding positions include D286, K355, and 362–363; that span reads RR.

This sequence belongs to the PurK/PurT family. As to quaternary structure, homodimer.

The enzyme catalyses N(1)-(5-phospho-beta-D-ribosyl)glycinamide + formate + ATP = N(2)-formyl-N(1)-(5-phospho-beta-D-ribosyl)glycinamide + ADP + phosphate + H(+). Its pathway is purine metabolism; IMP biosynthesis via de novo pathway; N(2)-formyl-N(1)-(5-phospho-D-ribosyl)glycinamide from N(1)-(5-phospho-D-ribosyl)glycinamide (formate route): step 1/1. In terms of biological role, involved in the de novo purine biosynthesis. Catalyzes the transfer of formate to 5-phospho-ribosyl-glycinamide (GAR), producing 5-phospho-ribosyl-N-formylglycinamide (FGAR). Formate is provided by PurU via hydrolysis of 10-formyl-tetrahydrofolate. This chain is Formate-dependent phosphoribosylglycinamide formyltransferase, found in Klebsiella pneumoniae (strain 342).